The chain runs to 462 residues: Siroheme synthase (462 aa).

The precorrin-2 dehydrogenase /sirohydrochlorin ferrochelatase stretch occupies residues M1–I203. Residues N22–V23 and D43–D44 each bind NAD(+). S128 bears the Phosphoserine mark. The interval G215–Q462 is uroporphyrinogen-III C-methyltransferase. P224 contributes to the S-adenosyl-L-methionine binding site. D247 serves as the catalytic Proton acceptor. The Proton donor role is filled by K269. S-adenosyl-L-methionine contacts are provided by residues G300 to D302, I305, T330 to A331, M383, and G412.

In the N-terminal section; belongs to the precorrin-2 dehydrogenase / sirohydrochlorin ferrochelatase family. This sequence in the C-terminal section; belongs to the precorrin methyltransferase family.

It carries out the reaction uroporphyrinogen III + 2 S-adenosyl-L-methionine = precorrin-2 + 2 S-adenosyl-L-homocysteine + H(+). The catalysed reaction is precorrin-2 + NAD(+) = sirohydrochlorin + NADH + 2 H(+). It catalyses the reaction siroheme + 2 H(+) = sirohydrochlorin + Fe(2+). The protein operates within cofactor biosynthesis; adenosylcobalamin biosynthesis; precorrin-2 from uroporphyrinogen III: step 1/1. Its pathway is cofactor biosynthesis; adenosylcobalamin biosynthesis; sirohydrochlorin from precorrin-2: step 1/1. It participates in porphyrin-containing compound metabolism; siroheme biosynthesis; precorrin-2 from uroporphyrinogen III: step 1/1. It functions in the pathway porphyrin-containing compound metabolism; siroheme biosynthesis; siroheme from sirohydrochlorin: step 1/1. The protein operates within porphyrin-containing compound metabolism; siroheme biosynthesis; sirohydrochlorin from precorrin-2: step 1/1. Multifunctional enzyme that catalyzes the SAM-dependent methylations of uroporphyrinogen III at position C-2 and C-7 to form precorrin-2 via precorrin-1. Then it catalyzes the NAD-dependent ring dehydrogenation of precorrin-2 to yield sirohydrochlorin. Finally, it catalyzes the ferrochelation of sirohydrochlorin to yield siroheme. This is Siroheme synthase from Baumannia cicadellinicola subsp. Homalodisca coagulata.